We begin with the raw amino-acid sequence, 243 residues long: Precursor of CEP9 (243 aa).

The first 26 residues, 1 to 26 (MKLLSITLTSIVISMVFYQTPITTEA), serve as a signal peptide directing secretion. The propeptide occupies 28–44 (SLRKTNDQDHFKAGFTD). Disordered regions lie at residues 42–63 (FTDD…KKGN), 91–173 (KTGS…VKGF), and 189–243 (NGQD…EPKA). Hydroxyproline; partial is present on P48. The residue at position 51 (P51) is a Hydroxyproline. P55 carries the post-translational modification Hydroxyproline; partial. A propeptide spanning residues 60 to 96 (KKGNVNVEGFQDDFKPTEGRKLLKTNVQDHFKTGSTD) is cleaved from the precursor. A hydroxyproline mark is found at P100, P103, and P107. A propeptide spanning residues 112–148 (KKGNVNVESSEDDFKHKEGRKLQQTNGQNHFKTGSTD) is cleaved from the precursor. The span at 133–147 (LQQTNGQNHFKTGST) shows a compositional bias: polar residues. 3 positions are modified to hydroxyproline: P152, P155, and P159. The propeptide occupies 164–200 (KKGHANVKGFKDDFAPTEEIRLQKMNGQDHFKTGSTD). Residues P204, P207, and P211 each carry the hydroxyproline modification. A propeptide spanning residues 216 to 219 (KKGD) is cleaved from the precursor. 3 positions are modified to hydroxyproline: P223, P226, and P230. Residues 235–243 (AVKNDEPKA) constitute a propeptide that is removed on maturation.

This sequence belongs to the C-terminally encoded plant signaling peptide (CEP) family. Interacts with CEP receptors (e.g. CEPR1 and CEPR2). Post-translationally, hydroxylated peptide is more active than non-hydroxylated peptide. The mature small signaling peptide is generated by proteolytic processing of the longer precursor. In terms of tissue distribution, expressed in lateral root primordia and in lateral roots excluding the meristem region. Also present in the aerial tissues, such as leaf petioles and the shoot apex region.

Its subcellular location is the secreted. It is found in the extracellular space. It localises to the apoplast. Functionally, extracellular signaling peptide that represses primary root growth rate and significantly inhibits lateral root formation. Modulates leaf morphology. Regulates systemic nitrogen (N)-demand signaling. Mediates up-regulation of genes involved in N uptake and assimilation pathways. The protein is Precursor of CEP9 of Arabidopsis thaliana (Mouse-ear cress).